A 199-amino-acid polypeptide reads, in one-letter code: Recombination protein RecR (199 aa).

The C4-type zinc-finger motif lies at 57–72 (CSVCGNITEQDPCAIC). Positions 80-176 (STIMVVEEAK…KVTRLAAGLA (97 aa)) constitute a Toprim domain.

This sequence belongs to the RecR family.

Its function is as follows. May play a role in DNA repair. It seems to be involved in an RecBC-independent recombinational process of DNA repair. It may act with RecF and RecO. The polypeptide is Recombination protein RecR (Lactobacillus delbrueckii subsp. bulgaricus (strain ATCC BAA-365 / Lb-18)).